Here is a 175-residue protein sequence, read N- to C-terminus: Glucagon family neuropeptides (175 aa).

Residues 1-23 (MSGNVYKTLLTLLVYGLIMHCNV) form the signal peptide. Residues 24-80 (YCSPDRWTPVPGAKLEEEVYDEDGNTLQDFALRAGAPGGGGPRPRWGRCTALYYPPG) constitute a propeptide that is removed on maturation. An important for receptor binding region spans residues 149–157 (VKKYLAAVL). The residue at position 157 (L157) is a Leucine amide. K168 bears the Lysine amide mark. A propeptide spanning residues 172 to 175 (VAYL) is cleaved from the precursor.

It belongs to the glucagon family.

The protein localises to the secreted. Functionally, primary role of GRF is to release GH from the pituitary. In terms of biological role, PACAP is a neuropeptide involved in diverse array of physiological processes through activating the PACAP subfamily of class B1 G protein-coupled receptors: VIP receptor 1 (VIPR1), VIP receptor 2 (VIPR2), and PACAP type I receptor (ADCYAP1R1). Exerts neuroprotective and general cytoprotective effects due to anti-apoptotic, anti-inflammatory, and antioxidant actions. Promotes neuron projection development through the RAPGEF2/Rap1/B-Raf/ERK pathway. In chromaffin cells, induces long-lasting increase of intracellular calcium concentrations and neuroendocrine secretion. Involved in the control of glucose homeostasis, induces insulin secretion by pancreatic beta cells. PACAP exists in two bioactive forms from proteolysis of the same precursor protein, PACAP27 and PACAP38, which differ by eleven amino acid residues in the C-terminus. The polypeptide is Glucagon family neuropeptides (ADCYAP1) (Gallus gallus (Chicken)).